The primary structure comprises 863 residues: Leucine--tRNA ligase (863 aa).

Residues Pro-42–His-52 carry the 'HIGH' region motif. The 'KMSKS' region motif lies at Lys-618 to Ser-622. Lys-621 lines the ATP pocket.

The protein belongs to the class-I aminoacyl-tRNA synthetase family.

The protein resides in the cytoplasm. It catalyses the reaction tRNA(Leu) + L-leucine + ATP = L-leucyl-tRNA(Leu) + AMP + diphosphate. This chain is Leucine--tRNA ligase, found in Colwellia psychrerythraea (strain 34H / ATCC BAA-681) (Vibrio psychroerythus).